The chain runs to 428 residues: Sorting nexin-31 (428 aa).

The PX domain maps to 1–107 (MHICIPVTEE…EYFKKLQMDT (107 aa)).

This sequence belongs to the sorting nexin family.

Its function is as follows. May be involved in protein trafficking. This Xenopus tropicalis (Western clawed frog) protein is Sorting nexin-31 (snx31).